Consider the following 451-residue polypeptide: Arginine biosynthesis bifunctional protein ArgJ, mitochondrial (451 aa).

The substrate site is built by T180, K209, T220, E307, N446, and T451. The active-site Nucleophile is T220.

The protein belongs to the ArgJ family. In terms of assembly, heterodimer of an alpha and a beta chain. The alpha and beta chains are autoproteolytically processed from a single precursor protein within the mitochondrion.

It is found in the mitochondrion matrix. It catalyses the reaction N(2)-acetyl-L-ornithine + L-glutamate = N-acetyl-L-glutamate + L-ornithine. It carries out the reaction L-glutamate + acetyl-CoA = N-acetyl-L-glutamate + CoA + H(+). Its pathway is amino-acid biosynthesis; L-arginine biosynthesis; L-ornithine and N-acetyl-L-glutamate from L-glutamate and N(2)-acetyl-L-ornithine (cyclic): step 1/1. It functions in the pathway amino-acid biosynthesis; L-arginine biosynthesis; N(2)-acetyl-L-ornithine from L-glutamate: step 1/4. Functionally, catalyzes two activities which are involved in the cyclic version of arginine biosynthesis: the synthesis of acetylglutamate from glutamate and acetyl-CoA, and of ornithine by transacetylation between acetylornithine and glutamate. The sequence is that of Arginine biosynthesis bifunctional protein ArgJ, mitochondrial from Fusarium vanettenii (strain ATCC MYA-4622 / CBS 123669 / FGSC 9596 / NRRL 45880 / 77-13-4) (Fusarium solani subsp. pisi).